A 200-amino-acid polypeptide reads, in one-letter code: GTP cyclohydrolase-2 (200 aa).

49-53 serves as a coordination point for GTP; the sequence is RIHSE. Zn(2+) contacts are provided by Cys54, Cys65, and Cys67. GTP contacts are provided by residues Gln70, 92 to 94, and Thr114; that span reads EGR. Asp126 (proton acceptor) is an active-site residue. The active-site Nucleophile is Arg128. Positions 149 and 154 each coordinate GTP.

The protein belongs to the GTP cyclohydrolase II family. Requires Zn(2+) as cofactor.

The enzyme catalyses GTP + 4 H2O = 2,5-diamino-6-hydroxy-4-(5-phosphoribosylamino)-pyrimidine + formate + 2 phosphate + 3 H(+). The protein operates within cofactor biosynthesis; riboflavin biosynthesis; 5-amino-6-(D-ribitylamino)uracil from GTP: step 1/4. Functionally, catalyzes the conversion of GTP to 2,5-diamino-6-ribosylamino-4(3H)-pyrimidinone 5'-phosphate (DARP), formate and pyrophosphate. This is GTP cyclohydrolase-2 from Saccharophagus degradans (strain 2-40 / ATCC 43961 / DSM 17024).